The primary structure comprises 277 residues: Shikimate dehydrogenase (NADP(+)) (277 aa).

Shikimate contacts are provided by residues 18-20 and threonine 65; that span reads SKS. Residue lysine 69 is the Proton acceptor of the active site. Glutamate 81 is an NADP(+) binding site. Positions 90 and 106 each coordinate shikimate. Residues 130-134, 154-159, and methionine 217 contribute to the NADP(+) site; these read GAGGA and NRTFSK. Residue tyrosine 219 participates in shikimate binding. Glycine 241 is a binding site for NADP(+).

This sequence belongs to the shikimate dehydrogenase family. As to quaternary structure, homodimer.

The enzyme catalyses shikimate + NADP(+) = 3-dehydroshikimate + NADPH + H(+). Its pathway is metabolic intermediate biosynthesis; chorismate biosynthesis; chorismate from D-erythrose 4-phosphate and phosphoenolpyruvate: step 4/7. Its function is as follows. Involved in the biosynthesis of the chorismate, which leads to the biosynthesis of aromatic amino acids. Catalyzes the reversible NADPH linked reduction of 3-dehydroshikimate (DHSA) to yield shikimate (SA). This Vibrio parahaemolyticus serotype O3:K6 (strain RIMD 2210633) protein is Shikimate dehydrogenase (NADP(+)).